Here is a 276-residue protein sequence, read N- to C-terminus: Adenylyl-sulfate kinase 1, chloroplastic (276 aa).

The N-terminal 38 residues, methionine 1–cysteine 38, are a transit peptide targeting the chloroplast. Residues threonine 46–threonine 74 are disordered. A compositionally biased stretch (polar residues) spans asparagine 62–threonine 74. An ATP-binding site is contributed by glycine 108–threonine 116. Residues aspartate 138, arginine 141, arginine 155, asparagine 158, isoleucine 181–serine 182, and glycine 231 each bind substrate. Serine 182 serves as the catalytic Phosphoserine intermediate.

This sequence belongs to the APS kinase family. In terms of assembly, homodimer; disulfide-linked. Interacts with APK2. In terms of tissue distribution, expressed in root vasculature, root tips, leaf epidermal and guard cells, pollen grains and funiculus of developing seeds.

The protein localises to the plastid. It localises to the chloroplast. The enzyme catalyses adenosine 5'-phosphosulfate + ATP = 3'-phosphoadenylyl sulfate + ADP + H(+). The protein operates within sulfur metabolism; hydrogen sulfide biosynthesis; sulfite from sulfate: step 2/3. Catalyzes the synthesis of activated sulfate. Essential for plant reproduction and viability. Required for the production of glucosinolates. The protein is Adenylyl-sulfate kinase 1, chloroplastic (APK1) of Arabidopsis thaliana (Mouse-ear cress).